The sequence spans 342 residues: Dihydroorotase (342 aa).

Zn(2+) contacts are provided by histidine 13 and histidine 15. Residues 15–17 and asparagine 41 each bind substrate; that span reads HLR. Lysine 98, histidine 135, and histidine 173 together coordinate Zn(2+). Position 98 is an N6-carboxylysine (lysine 98). Residue histidine 135 participates in substrate binding. Leucine 218 contributes to the substrate binding site. Aspartate 246 contacts Zn(2+). The active site involves aspartate 246. The substrate site is built by histidine 250 and alanine 262.

Belongs to the metallo-dependent hydrolases superfamily. DHOase family. Class II DHOase subfamily. As to quaternary structure, homodimer. Requires Zn(2+) as cofactor.

It catalyses the reaction (S)-dihydroorotate + H2O = N-carbamoyl-L-aspartate + H(+). It participates in pyrimidine metabolism; UMP biosynthesis via de novo pathway; (S)-dihydroorotate from bicarbonate: step 3/3. Its function is as follows. Catalyzes the reversible cyclization of carbamoyl aspartate to dihydroorotate. This Vibrio atlanticus (strain LGP32) (Vibrio splendidus (strain Mel32)) protein is Dihydroorotase.